We begin with the raw amino-acid sequence, 366 residues long: Probable UDP-arabinopyranose mutase 2 (366 aa).

A DXD motif motif is present at residues 104 to 106 (DDD). The N-linked (Glc...) arginine glycan is linked to Arg-152.

The protein belongs to the RGP family. Homopentamer or homohexamer. It depends on Mn(2+) as a cofactor. Requires Mg(2+) as cofactor. In terms of processing, reversibly glycosylated by UDP-glucose, UDP-xylose and UDP-galactose, but not UDP-mannose. As to expression, expressed in all tissues tested, including root, tuber, leaf, petiole, shoot, stolon and stem.

It is found in the secreted. The protein resides in the cell wall. It localises to the cell junction. Its subcellular location is the plasmodesma. The protein localises to the golgi apparatus. The catalysed reaction is UDP-beta-L-arabinofuranose = UDP-beta-L-arabinopyranose. Functionally, probable UDP-L-arabinose mutase involved in the biosynthesis of cell wall non-cellulosic polysaccharides. Was initially shown to possess an autoglycosylating activity which is dependent on the presence of UDP-glucose and manganese. The chain is Probable UDP-arabinopyranose mutase 2 from Solanum tuberosum (Potato).